Reading from the N-terminus, the 373-residue chain is 3 beta-hydroxysteroid dehydrogenase/Delta 5--&gt;4-isomerase type 1 (373 aa).

NADP(+) contacts are provided by residues Gly10–Val15, Tyr155, and Lys159. Lys159 (proton donor) is an active-site residue. The chain crosses the membrane as a helical span at residues Leu288–Phe308.

Belongs to the 3-beta-HSD family. Adrenal glands, kidney, testes and ovaries.

Its subcellular location is the endoplasmic reticulum membrane. The protein localises to the mitochondrion membrane. The enzyme catalyses a 3beta-hydroxy-Delta(5)-steroid + NAD(+) = a 3-oxo-Delta(5)-steroid + NADH + H(+). The catalysed reaction is pregnenolone + NAD(+) = pregn-5-ene-3,20-dione + NADH + H(+). It carries out the reaction 3beta-hydroxyandrost-5-en-17-one + NAD(+) = androst-5-ene-3,17-dione + NADH + H(+). It catalyses the reaction androst-5-en-3beta,17beta-diol + NAD(+) = 17beta-hydroxy-androst-5-en-3-one + NADH + H(+). The enzyme catalyses a 3beta-hydroxysteroid + NADP(+) = a 3-oxosteroid + NADPH + H(+). The catalysed reaction is 5alpha-androstane-3beta,17beta-diol + NADP(+) = 17beta-hydroxy-5alpha-androstan-3-one + NADPH + H(+). It carries out the reaction 3beta-hydroxy-5alpha-androstan-17-one + NADP(+) = 5alpha-androstan-3,17-dione + NADPH + H(+). It catalyses the reaction a 3-oxo-Delta(5)-steroid = a 3-oxo-Delta(4)-steroid. The enzyme catalyses pregn-5-ene-3,20-dione = progesterone. The catalysed reaction is androst-5-ene-3,17-dione = androst-4-ene-3,17-dione. It carries out the reaction 17beta-hydroxy-androst-5-en-3-one = testosterone. It catalyses the reaction 5alpha-androstane-3beta,17beta-diol + NAD(+) = 17beta-hydroxy-5alpha-androstan-3-one + NADH + H(+). The protein operates within steroid hormone biosynthesis. It functions in the pathway steroid metabolism. Its function is as follows. A bifunctional enzyme responsible for the oxidation and isomerization of 3beta-hydroxy-Delta(5)-steroid precursors to 3-oxo-Delta(4)-steroids, an essential step in steroid hormone biosynthesis. Specifically catalyzes the conversion of pregnenolone to progesterone, dehydroepiandrosterone (DHEA) to 4-androstenedione, and androstenediol to testosterone. Additionally, catalyzes the interconversion between 3beta-hydroxy and 3-oxo-5alpha-androstane steroids controlling the bioavalability of the active forms. Specifically converts dihydrotestosterone to its inactive form 5alpha-androstanediol, that does not bind androgen receptor/AR. Also converts androstanedione, a precursor of testosterone and estrone, to epiandrosterone. Expected to use NAD(+) as preferred electron donor for the 3beta-hydroxy-steroid dehydrogenase activity and NADPH for the 3-ketosteroid reductase activity. This is 3 beta-hydroxysteroid dehydrogenase/Delta 5--&gt;4-isomerase type 1 from Rattus norvegicus (Rat).